The sequence spans 287 residues: Syntaxin-11 (287 aa).

Positions L41–R71 form a coiled coil. Positions L204 to A266 constitute a t-SNARE coiled-coil homology domain.

It belongs to the syntaxin family. In terms of assembly, interacts with the SNARE proteins SNAP-23 and VAMP.

It is found in the membrane. It localises to the golgi apparatus. The protein resides in the trans-Golgi network membrane. Its function is as follows. SNARE that acts to regulate protein transport between late endosomes and the trans-Golgi network. This is Syntaxin-11 (STX11) from Homo sapiens (Human).